The primary structure comprises 655 residues: uncharacterized protein (655 aa).

The chain crosses the membrane as a helical span at residues 5-25; the sequence is IIIIIFIVINFINIIISSITF. Disordered regions lie at residues 337–363 and 484–525; these read NSDY…NNNN and DKIG…SDNS. The segment covering 515 to 524 has biased composition (low complexity); sequence DNNSIGSSDN. The chain crosses the membrane as a helical span at residues 588–608; the sequence is ILAVTISAIGIICVALLLTVV.

It is found in the membrane. This is an uncharacterized protein from Dictyostelium discoideum (Social amoeba).